We begin with the raw amino-acid sequence, 358 residues long: Dual-specificity RNA methyltransferase RlmN (358 aa).

Catalysis depends on E91, which acts as the Proton acceptor. The Radical SAM core domain maps to 98–335 (SQGRITQCLS…AIIRKSKGAD (238 aa)). C105 and C340 are oxidised to a cystine. Residues C112, C116, and C119 each contribute to the [4Fe-4S] cluster site. S-adenosyl-L-methionine-binding positions include 164 to 165 (GE), S196, 219 to 221 (SLH), and N295. The active-site S-methylcysteine intermediate is the C340.

Belongs to the radical SAM superfamily. RlmN family. It depends on [4Fe-4S] cluster as a cofactor.

The protein resides in the cytoplasm. It catalyses the reaction adenosine(2503) in 23S rRNA + 2 reduced [2Fe-2S]-[ferredoxin] + 2 S-adenosyl-L-methionine = 2-methyladenosine(2503) in 23S rRNA + 5'-deoxyadenosine + L-methionine + 2 oxidized [2Fe-2S]-[ferredoxin] + S-adenosyl-L-homocysteine. The enzyme catalyses adenosine(37) in tRNA + 2 reduced [2Fe-2S]-[ferredoxin] + 2 S-adenosyl-L-methionine = 2-methyladenosine(37) in tRNA + 5'-deoxyadenosine + L-methionine + 2 oxidized [2Fe-2S]-[ferredoxin] + S-adenosyl-L-homocysteine. Functionally, specifically methylates position 2 of adenine 2503 in 23S rRNA and position 2 of adenine 37 in tRNAs. m2A2503 modification seems to play a crucial role in the proofreading step occurring at the peptidyl transferase center and thus would serve to optimize ribosomal fidelity. The chain is Dual-specificity RNA methyltransferase RlmN from Oleidesulfovibrio alaskensis (strain ATCC BAA-1058 / DSM 17464 / G20) (Desulfovibrio alaskensis).